A 505-amino-acid polypeptide reads, in one-letter code: ATP synthase subunit alpha (505 aa).

Residue 170–177 coordinates ATP; sequence GDRQTGKT.

This sequence belongs to the ATPase alpha/beta chains family. F-type ATPases have 2 components, CF(1) - the catalytic core - and CF(0) - the membrane proton channel. CF(1) has five subunits: alpha(3), beta(3), gamma(1), delta(1), epsilon(1). CF(0) has four main subunits: a(1), b(1), b'(1) and c(9-12).

It localises to the cellular thylakoid membrane. The catalysed reaction is ATP + H2O + 4 H(+)(in) = ADP + phosphate + 5 H(+)(out). In terms of biological role, produces ATP from ADP in the presence of a proton gradient across the membrane. The alpha chain is a regulatory subunit. This is ATP synthase subunit alpha from Prochlorococcus marinus subsp. pastoris (strain CCMP1986 / NIES-2087 / MED4).